A 619-amino-acid polypeptide reads, in one-letter code: Grainyhead-like protein 2 homolog (619 aa).

The segment at 1–90 (MSQETDNKRL…KINEGHEDQD (90 aa)) is transcription activation. Disordered stretches follow at residues 86-108 (HEDQ…STGE), 125-147 (NDTV…PQPA), and 423-444 (EERK…CNNS). A compositionally biased stretch (polar residues) spans 99 to 108 (ETPSNLSTGE). In terms of domain architecture, Grh/CP2 DB spans 239–477 (ASSTFQYTLE…DLDVQPVLFI (239 aa)).

The protein belongs to the grh/CP2 family. Grainyhead subfamily.

Its subcellular location is the nucleus. The protein localises to the membrane. Transcription factor playing an important role in primary neurulation and in epithelial development. Binds directly to the consensus DNA sequence 5'-AACCGGTT-3' acting as an activator and repressor on distinct target genes. This chain is Grainyhead-like protein 2 homolog (grhl2), found in Xenopus tropicalis (Western clawed frog).